Here is a 312-residue protein sequence, read N- to C-terminus: tRNA dimethylallyltransferase (312 aa).

Residue 11-18 (GLTATGKT) participates in ATP binding. Residue 13-18 (TATGKT) participates in substrate binding. Positions 36 to 39 (DSMC) are interaction with substrate tRNA.

It belongs to the IPP transferase family. Monomer. It depends on Mg(2+) as a cofactor.

The enzyme catalyses adenosine(37) in tRNA + dimethylallyl diphosphate = N(6)-dimethylallyladenosine(37) in tRNA + diphosphate. Catalyzes the transfer of a dimethylallyl group onto the adenine at position 37 in tRNAs that read codons beginning with uridine, leading to the formation of N6-(dimethylallyl)adenosine (i(6)A). The polypeptide is tRNA dimethylallyltransferase (Caldicellulosiruptor bescii (strain ATCC BAA-1888 / DSM 6725 / KCTC 15123 / Z-1320) (Anaerocellum thermophilum)).